The chain runs to 580 residues: MAQEVSEYLSQNPRVAAWVEALRCDGETDKHWRHRRDFLLRNAGDLAPAGGAASASTDEAADAESGTRNRQLQQLISFSMAWANHVFLGCRYPQKVMDKILSMAEGIKVTDAPTYTTRDELVAKVKKRGISSSNEGVEEPSKKRVIEGKNSSAVEQDHAKTSAKTERASAQQENSSTCIGSAIKSESGNSARSSGISSQNSSTSDGDRSVSSQSSSSVSSQVTTAGSGKASEAEAPDKHGSASFVSLLKSSVNSHMTQSTDSRQQSGSPKKSALEGSSASASQSSSEIEVPLLGSSGSSEVELPLLSSKPSSETASSGLTSKTSSEASVSSSVAKNSSSSGTSLLTPKSSSSTNTSLLTSKSTSQVAASLLASKSSSQTSGSLVSKSTSLASVSQLASKSSSQTSTSQLPSKSTSQSSESSVKFSCKLTNEDVKQKQPFFNRLYKTVAWKLVAVGGFSPNVNHGELLNAAIEALKATLDVFFVPLKELADLPQNKSSQESIVCELRCKSVYLGTGCGKSKENAKAVASREALKLFLKKKVVVKICKRKYRGSEIEDLVLLDEESRPVNLPPALKHPQELL.

Ala-2 carries the post-translational modification N-acetylalanine. The 115-residue stretch at 19–133 (VEALRCDGET…KVKKRGISSS (115 aa)) folds into the XRN2-binding (XTBD) domain. Residues 129–356 (GISSSNEGVE…PKSSSSTNTS (228 aa)) are disordered. A Phosphoserine modification is found at Ser-131. Basic and acidic residues predominate over residues 155 to 167 (EQDHAKTSAKTER). Residues 168 to 179 (ASAQQENSSTCI) are compositionally biased toward polar residues. Lys-184 is covalently cross-linked (Glycyl lysine isopeptide (Lys-Gly) (interchain with G-Cter in SUMO1)). The segment covering 185-228 (SESGNSARSSGISSQNSSTSDGDRSVSSQSSSSVSSQVTTAGSG) has biased composition (low complexity). Basic and acidic residues predominate over residues 231–240 (SEAEAPDKHG). The residue at position 241 (Ser-241) is a Phosphoserine. The span at 248–269 (LKSSVNSHMTQSTDSRQQSGSP) shows a compositional bias: polar residues. Low complexity-rich tracts occupy residues 274–313 (LEGS…PSSE) and 321–356 (SKTS…TNTS). At Thr-346 the chain carries Phosphothreonine. Ser-389 is subject to Phosphoserine. The DRBM domain occupies 462-537 (NHGELLNAAI…SREALKLFLK (76 aa)).

The protein belongs to the CARF family. In terms of assembly, interacts with CDKN2A/p14ARF, p53/TP53 and MDM2. Interacts with CHEK2 and MAPK3. Interacts with XRN2. Post-translationally, may be ubiquitinated. As to expression, ubiquitously expressed.

The protein resides in the nucleus. Its subcellular location is the nucleoplasm. Functionally, regulates DNA damage response in a dose-dependent manner through a number of signaling pathways involved in cell proliferation, apoptosis and senescence. This is CDKN2A-interacting protein (CDKN2AIP) from Homo sapiens (Human).